Consider the following 517-residue polypeptide: BTB/POZ domain-containing protein At3g49900 (517 aa).

The span at Ser28–Ser37 shows a compositional bias: low complexity. Residues Ser28–Ser49 are disordered. Over residues Pro38 to Ser49 the composition is skewed to polar residues. The 64-residue stretch at Pro67–Pro130 folds into the BTB domain. Residues Leu224 to Asn307 enclose the NPH3 domain. A disordered region spans residues Ala409–Ser456.

The protein belongs to the NPH3 family.

It functions in the pathway protein modification; protein ubiquitination. Its function is as follows. May act as a substrate-specific adapter of an E3 ubiquitin-protein ligase complex (CUL3-RBX1-BTB) which mediates the ubiquitination and subsequent proteasomal degradation of target proteins. In Arabidopsis thaliana (Mouse-ear cress), this protein is BTB/POZ domain-containing protein At3g49900.